The sequence spans 433 residues: 3-phosphoshikimate 1-carboxyvinyltransferase (433 aa).

Residues lysine 23, serine 24, and arginine 28 each coordinate 3-phosphoshikimate. Lysine 23 contributes to the phosphoenolpyruvate binding site. Residues glycine 95 and arginine 123 each contribute to the phosphoenolpyruvate site. 3-phosphoshikimate is bound by residues serine 170, serine 171, glutamine 172, serine 198, aspartate 317, and lysine 344. Glutamine 172 serves as a coordination point for phosphoenolpyruvate. Catalysis depends on aspartate 317, which acts as the Proton acceptor. 3 residues coordinate phosphoenolpyruvate: arginine 348, arginine 391, and lysine 416.

It belongs to the EPSP synthase family. As to quaternary structure, monomer.

It localises to the cytoplasm. It carries out the reaction 3-phosphoshikimate + phosphoenolpyruvate = 5-O-(1-carboxyvinyl)-3-phosphoshikimate + phosphate. It participates in metabolic intermediate biosynthesis; chorismate biosynthesis; chorismate from D-erythrose 4-phosphate and phosphoenolpyruvate: step 6/7. In terms of biological role, catalyzes the transfer of the enolpyruvyl moiety of phosphoenolpyruvate (PEP) to the 5-hydroxyl of shikimate-3-phosphate (S3P) to produce enolpyruvyl shikimate-3-phosphate and inorganic phosphate. This chain is 3-phosphoshikimate 1-carboxyvinyltransferase, found in Neisseria meningitidis serogroup B (strain ATCC BAA-335 / MC58).